Consider the following 317-residue polypeptide: Ribosomal protein L11 methyltransferase (317 aa).

S-adenosyl-L-methionine is bound by residues Thr158, Gly179, Asp201, and Asn244.

The protein belongs to the methyltransferase superfamily. PrmA family.

The protein resides in the cytoplasm. The enzyme catalyses L-lysyl-[protein] + 3 S-adenosyl-L-methionine = N(6),N(6),N(6)-trimethyl-L-lysyl-[protein] + 3 S-adenosyl-L-homocysteine + 3 H(+). Its function is as follows. Methylates ribosomal protein L11. The protein is Ribosomal protein L11 methyltransferase of Streptococcus equi subsp. zooepidemicus (strain H70).